Reading from the N-terminus, the 191-residue chain is Peptidyl-tRNA hydrolase (191 aa).

Tyr-17 is a tRNA binding site. Residue His-22 is the Proton acceptor of the active site. TRNA is bound by residues Tyr-68, Asn-70, and Asn-116.

Belongs to the PTH family. Monomer.

Its subcellular location is the cytoplasm. The enzyme catalyses an N-acyl-L-alpha-aminoacyl-tRNA + H2O = an N-acyl-L-amino acid + a tRNA + H(+). Its function is as follows. Hydrolyzes ribosome-free peptidyl-tRNAs (with 1 or more amino acids incorporated), which drop off the ribosome during protein synthesis, or as a result of ribosome stalling. Functionally, catalyzes the release of premature peptidyl moieties from peptidyl-tRNA molecules trapped in stalled 50S ribosomal subunits, and thus maintains levels of free tRNAs and 50S ribosomes. This is Peptidyl-tRNA hydrolase from Mycobacterium ulcerans (strain Agy99).